The following is an 857-amino-acid chain: Envelope glycoprotein gp160 (857 aa).

A signal peptide spans 1 to 26; the sequence is MAHTSNHLFILLLLISVYGFLGHKKN. Topologically, residues 27–682 are extracellular; it reads YVTVFYGIPA…FTSWMAYIRL (656 aa). N39 is a glycosylation site (N-linked (GlcNAc...) asparagine; by host). A disulfide bond links C46 and C59. 22 N-linked (GlcNAc...) asparagine; by host glycosylation sites follow: N72, N81, N116, N121, N142, N150, N167, N193, N205, N237, N240, N271, N277, N288, N299, N309, N364, N397, N407, N447, N464, and N469. Intrachain disulfides connect C103–C213, C110–C204, C115–C164, C226–C256, and C236–C248. Residues 115 to 163 are V1; it reads CNNTGTNTTTKPITTPITTTKPSENLLNDTSPCIKNDTCPGIGLENTVD. The tract at residues 164–204 is V2; it reads CYFNMTGLRRDEKKQYKDTWYEKDLECNGNSTSTICYMRTC. Residues 304–336 are V3; sequence CRRPGNKTVIPITIMSGLNFHSQPLNTRPRQAW. C304 and C337 form a disulfide bridge. Intrachain disulfides connect C389–C446 and C396–C419. The V4 stretch occupies residues 396-419; sequence CNMTWFLNWVENRTGTTQKNYVTC. Residues 464-472 form a V5 region; that stretch reads NDTKTNITM. A fusion peptide region spans residues 515 to 535; sequence GVMVLGFLGLLAMAGSAMGAT. Positions 578-594 are immunosuppression; that stretch reads LQTRVTAIEKYLKDQAL. N614, N623, and N639 each carry an N-linked (GlcNAc...) asparagine; by host glycan. Residues 627 to 648 are a coiled coil; the sequence is QQWEKRVNFLDANITALLEEAQ. The MPER; binding to GalCer stretch occupies residues 660–681; that stretch reads KLNSWDVFGNWFDFTSWMAYIR. The helical transmembrane segment at 683 to 703 threads the bilayer; that stretch reads GLYVVAGLIVLRIVIYIMQML. Over 704–857 the chain is Cytoplasmic; sequence ARLRKGYRPV…IRQGLELALL (154 aa). The short motif at 710 to 713 is the YXXV motif; contains endocytosis signal element; the sequence is YRPV. C776 is lipidated: S-palmitoyl cysteine; by host. The short motif at 856–857 is the Di-leucine internalization motif element; that stretch reads LL.

As to quaternary structure, the mature envelope protein (Env) consists of a homotrimer of non-covalently associated gp120-gp41 heterodimers. The resulting complex protrudes from the virus surface as a spike. There seems to be as few as 10 spikes on the average virion. Interacts with human CD4, CCR5 and CXCR4, to form a P4HB/PDI-CD4-CXCR4-gp120 complex. Gp120 also interacts with the C-type lectins CD209/DC-SIGN and CLEC4M/DC-SIGNR (collectively referred to as DC-SIGN(R)). Gp120 and gp41 interact with GalCer. The mature envelope protein (Env) consists of a homotrimer of non-covalently associated gp120-gp41 heterodimers. The resulting complex protrudes from the virus surface as a spike. There seems to be as few as 10 spikes on the average virion. Post-translationally, specific enzymatic cleavages in vivo yield mature proteins. Envelope glycoproteins are synthesized as an inactive precursor that is heavily N-glycosylated and processed likely by host cell furin in the Golgi to yield the mature SU and TM proteins. The cleavage site between SU and TM requires the minimal sequence [KR]-X-[KR]-R. In terms of processing, palmitoylation of the transmembrane protein and of Env polyprotein (prior to its proteolytic cleavage) is essential for their association with host cell membrane lipid rafts. Palmitoylation is therefore required for envelope trafficking to classical lipid rafts, but not for viral replication.

Its subcellular location is the virion membrane. It localises to the host cell membrane. The protein resides in the host endosome membrane. In terms of biological role, the surface protein gp120 (SU) attaches the virus to the host lymphoid cell by binding to the primary receptor CD4. This interaction induces a structural rearrangement creating a high affinity binding site for a chemokine coreceptor like CXCR4 and/or CCR5. This peculiar 2 stage receptor-interaction strategy allows gp120 to maintain the highly conserved coreceptor-binding site in a cryptic conformation, protected from neutralizing antibodies. Since CD4 also displays a binding site for the disulfide-isomerase P4HB/PDI, a P4HB/PDI-CD4-CXCR4-gp120 complex may form. In that complex, P4HB/PDI could reach and reduce gp120 disulfide bonds, causing major conformational changes in gp120. TXN, another PDI family member could also be involved in disulfide rearrangements in Env during fusion. These changes are transmitted to the transmembrane protein gp41 and are thought to activate its fusogenic potential by unmasking its fusion peptide. Its function is as follows. The surface protein gp120 is a ligand for CD209/DC-SIGN and CLEC4M/DC-SIGNR, which are respectively found on dendritic cells (DCs), and on endothelial cells of liver sinusoids and lymph node sinuses. These interactions allow capture of viral particles at mucosal surfaces by these cells and subsequent transmission to permissive cells. DCs are professional antigen presenting cells, critical for host immunity by inducing specific immune responses against a broad variety of pathogens. They act as sentinels in various tissues where they take up antigen, process it, and present it to T-cells following migration to lymphoid organs. HIV subverts the migration properties of dendritic cells to gain access to CD4+ T-cells in lymph nodes. Virus transmission to permissive T-cells occurs either in trans (without DCs infection, through viral capture and transmission), or in cis (following DCs productive infection, through the usual CD4-gp120 interaction), thereby inducing a robust infection. In trans infection, bound virions remain infectious over days and it is proposed that they are not degraded, but protected in non-lysosomal acidic organelles within the DCs close to the cell membrane thus contributing to the viral infectious potential during DCs' migration from the periphery to the lymphoid tissues. On arrival at lymphoid tissues, intact virions recycle back to DCs' cell surface allowing virus transmission to CD4+ T-cells. Virion capture also seems to lead to MHC-II-restricted viral antigen presentation, and probably to the activation of HIV-specific CD4+ cells. Functionally, the transmembrane protein gp41 (TM) acts as a class I viral fusion protein. Under the current model, the protein has at least 3 conformational states: pre-fusion native state, pre-hairpin intermediate state, and post-fusion hairpin state. During fusion of viral and target intracellular membranes, the coiled coil regions (heptad repeats) assume a trimer-of-hairpins structure, positioning the fusion peptide in close proximity to the C-terminal region of the ectodomain. The formation of this structure appears to drive apposition and subsequent fusion of viral and target cell membranes. Complete fusion occurs in host cell endosomes and is dynamin-dependent, however some lipid transfer might occur at the plasma membrane. The virus undergoes clathrin-dependent internalization long before endosomal fusion, thus minimizing the surface exposure of conserved viral epitopes during fusion and reducing the efficacy of inhibitors targeting these epitopes. Membranes fusion leads to delivery of the nucleocapsid into the cytoplasm. The envelope glycoprotein gp160 precursor down-modulates cell surface CD4 antigen by interacting with it in the endoplasmic reticulum and blocking its transport to the cell surface. In terms of biological role, the gp120-gp41 heterodimer seems to contribute to T-cell depletion during HIV-1 infection. The envelope glycoproteins expressed on the surface of infected cells induce apoptosis through an interaction with uninfected cells expressing the receptor (CD4) and the coreceptors CXCR4 or CCR5. This type of bystander killing may be obtained by at least three distinct mechanisms. First, the interaction between the 2 cells can induce cellular fusion followed by nuclear fusion within the syncytium. Syncytia are condemned to die from apoptosis. Second, the 2 interacting cells may not fuse entirely and simply exchange plasma membrane lipids, after a sort of hemifusion process, followed by rapid death. Third, it is possible that virus-infected cells, on the point of undergoing apoptosis, fuse with CD4-expressing cells, in which case apoptosis is rapidly transmitted from one cell to the other and thus occurs in a sort of contagious fashion. Its function is as follows. The gp120-gp41 heterodimer allows rapid transcytosis of the virus through CD4 negative cells such as simple epithelial monolayers of the intestinal, rectal and endocervical epithelial barriers. Both gp120 and gp41 specifically recognize glycosphingolipids galactosyl-ceramide (GalCer) or 3' sulfo-galactosyl-ceramide (GalS) present in the lipid rafts structures of epithelial cells. Binding to these alternative receptors allows the rapid transcytosis of the virus through the epithelial cells. This transcytotic vesicle-mediated transport of virions from the apical side to the basolateral side of the epithelial cells does not involve infection of the cells themselves. This chain is Envelope glycoprotein gp160 (env), found in Homo sapiens (Human).